A 408-amino-acid chain; its full sequence is MDLRSRTDDALDMELHAGFDAPEIARAVLTEKTLTGLISSISPLVNRLRDSILIFSDEGLIIHCSLETEQLYIPIPANMFDQYNWTGPRMVVLAATEGRSSLIDAFRHTKDPSTPTRLYFKFTGQPPERSIIQTMVWQRPGDCGPDDQVQCYKQVVKRELACYTMMFPNLTPDISICLKRDQFTRLQRLLKTFGFTTCFILTATDMYIQTAGGGFISFNVSLDINGSKPTPYNLIRSITNSKRILNNVVYGSGSMREFGVLLETHSGFRSAVQNLKLTRDETCYINFYLALTNSPMVGLYIQRSAPVHSFFYATFLSPKDLKEKLTSMQLFANMESVKDEPPLKKRRNLLTKRNEKNTGNKMGGKLPETTWQEGIGIREYCVAPPVDPAGTLDYSELSRESDVICTVK.

Residues 344-353 carry the Nuclear localization signal motif; it reads KKRRNLLTKR.

This sequence belongs to the herpesviridae DNA polymerase processivity factor family. Interacts with the DNA polymerase catalytic subunit. Interacts with the origin-binding protein.

The protein resides in the host nucleus. Its function is as follows. Plays an essential role in viral DNA replication by acting as the polymerase accessory subunit. Associates with the viral polymerase to increase its processivity and forms high-affinity direct interactions with DNA. Facilitates the origin-binding protein loading onto DNA thus increasing its ability to assemble into a functional complex capable of unwinding duplex DNA. The polypeptide is DNA polymerase processivity factor (Varicella-zoster virus (strain Dumas) (HHV-3)).